Reading from the N-terminus, the 337-residue chain is UbiA prenyltransferase domain-containing protein 1 (337 aa).

An N-acetylalanine modification is found at alanine 2. Transmembrane regions (helical) follow at residues 82 to 102 (LLVG…LVNT), 133 to 153 (FGVF…CLSP), 159 to 179 (LALI…GIGF), 187 to 207 (LVIL…VQVG), 208 to 228 (SLAV…EAVL), 244 to 266 (IVTL…LLFL), 276 to 296 (THCS…FSLE), and 314 to 334 (LNLL…AGSL).

This sequence belongs to the UbiA prenyltransferase family. Interacts with HMGCR and SOAT1.

It is found in the endoplasmic reticulum membrane. It localises to the golgi apparatus membrane. Its subcellular location is the mitochondrion membrane. It carries out the reaction menadiol + (2E,6E,10E)-geranylgeranyl diphosphate = menaquinol-4 + diphosphate. The enzyme catalyses all-trans-decaprenyl diphosphate + 4-hydroxybenzoate = 4-hydroxy-3-(all-trans-decaprenyl)benzoate + diphosphate. The protein operates within quinol/quinone metabolism; menaquinone biosynthesis. Its pathway is cofactor biosynthesis; ubiquinone biosynthesis. In terms of biological role, prenyltransferase that mediates the formation of menaquinone-4 (MK-4) and coenzyme Q10. MK-4 is a vitamin K2 isoform required for endothelial cell development. Mediates the conversion of phylloquinone (PK) into MK-4, probably by cleaving the side chain of phylloquinone (PK) to release 2-methyl-1,4-naphthoquinone (menadione; K3) and then prenylating it with geranylgeranyl pyrophosphate (GGPP) to form MK-4. Also plays a role in cardiovascular development independently of MK-4 biosynthesis, by acting as a coenzyme Q10 biosynthetic enzyme: coenzyme Q10, also named ubiquinone, plays an important antioxidant role in the cardiovascular system. Mediates biosynthesis of coenzyme Q10 in the Golgi membrane, leading to protect cardiovascular tissues from NOS3/eNOS-dependent oxidative stress. In Ailuropoda melanoleuca (Giant panda), this protein is UbiA prenyltransferase domain-containing protein 1 (UBIAD1).